The chain runs to 279 residues: Biotin synthase (279 aa).

In terms of domain architecture, Radical SAM core spans 2 to 232 (VRNSRLDICS…NVTIKIAAGR (231 aa)). 3 residues coordinate [4Fe-4S] cluster: cysteine 20, cysteine 24, and cysteine 27. [2Fe-2S] cluster is bound by residues cysteine 96, cysteine 156, and lysine 227.

It belongs to the radical SAM superfamily. Biotin synthase family. In terms of assembly, homodimer. The cofactor is [4Fe-4S] cluster. [2Fe-2S] cluster serves as cofactor.

It catalyses the reaction (4R,5S)-dethiobiotin + (sulfur carrier)-SH + 2 reduced [2Fe-2S]-[ferredoxin] + 2 S-adenosyl-L-methionine = (sulfur carrier)-H + biotin + 2 5'-deoxyadenosine + 2 L-methionine + 2 oxidized [2Fe-2S]-[ferredoxin]. It participates in cofactor biosynthesis; biotin biosynthesis; biotin from 7,8-diaminononanoate: step 2/2. Functionally, catalyzes the conversion of dethiobiotin (DTB) to biotin by the insertion of a sulfur atom into dethiobiotin via a radical-based mechanism. The chain is Biotin synthase from Thermotoga neapolitana (strain ATCC 49049 / DSM 4359 / NBRC 107923 / NS-E).